The sequence spans 1437 residues: Histone-lysine N-methyltransferase NSD3 (1437 aa).

2 disordered regions span residues 121 to 157 (PHEI…KLKI) and 181 to 252 (QASE…PVQP). Pro residues predominate over residues 128–139 (PSPPQPPPPPSV). Residue Ser-150 is modified to Phosphoserine. Residues 154–157 (KLKI) carry the KIKL motif. Positions 187–201 (KSKHESRKEKRKKSN) are enriched in basic residues. Residues 202–248 (KHDSSRSEERKSHKIPKLEPEEQNRPNERVDTVSEKPREEPVLKEEA) show a composition bias toward basic and acidic residues. Residues Lys-218 and Lys-245 each participate in a glycyl lysine isopeptide (Lys-Gly) (interchain with G-Cter in SUMO2) cross-link. Residues 270-333 (VGDLVWSKVG…EKRVREYKGH (64 aa)) form the PWWP 1 domain. 2 disordered regions span residues 344–365 (TKQA…QRER) and 406–465 (AKKS…EPPP). A Glycyl lysine isopeptide (Lys-Gly) (interchain with G-Cter in SUMO2) cross-link involves residue Lys-413. The segment covering 425-445 (VLNTQPEQTNAGEVASSLSST) has biased composition (polar residues). Residue Ser-457 is modified to Phosphoserine. Glycyl lysine isopeptide (Lys-Gly) (interchain with G-Cter in SUMO2) cross-links involve residues Lys-502 and Lys-532. Residues 540 to 696 (QDRLIISTPN…DSSLSRRGTG (157 aa)) form a disordered region. Residues 546–571 (STPNQRNEKPTQSVSSPEATSGSTGS) are compositionally biased toward polar residues. Residues 583–595 (TRSESEKSTEVVP) show a composition bias toward basic and acidic residues. Residues Ser-585, Ser-587, and Ser-590 each carry the phosphoserine modification. Lys-628 is covalently cross-linked (Glycyl lysine isopeptide (Lys-Gly) (interchain with G-Cter in SUMO2)). At Ser-655 the chain carries Phosphoserine. The span at 682-692 (DVQSMDSSLSR) shows a compositional bias: polar residues. 3 PHD-type zinc fingers span residues 701–748 (DTVC…CKTG), 749–805 (QHPC…CSME), and 862–955 (VGFC…CKAG). Lys-790 bears the N6-acetyllysine mark. A PWWP 2 domain is found at 960–1022 (YKQIVWVKLG…QGRVFPYVEG (63 aa)). Positions 1033–1069 (INKTFKKALEEAAKRFQELKAQRESKEALEIEKNSRK) form a coiled coil. Residues 1093–1143 (SEIPRCNCKPADENPCGLESECLNRMLQYECHPQVCPAGDRCQNQCFTKRL) form the AWS domain. An SET domain is found at 1145-1262 (PDAEIIKTER…AGMELTFNYN (118 aa)). Residue Lys-1151 forms a Glycyl lysine isopeptide (Lys-Gly) (interchain with G-Cter in SUMO2) linkage. The Post-SET domain occupies 1269 to 1285 (GRTECHCGADNCSGFLG). The PHD-type 4; atypical zinc finger occupies 1321 to 1368 (EDYCFQCGDGGELVMCDKKDCPKAYHLLCLNLTQPPYGKWECPWHQCD).

Belongs to the class V-like SAM-binding methyltransferase superfamily. Histone-lysine methyltransferase family. SET2 subfamily. In terms of assembly, interacts with BRD4. Interacts (via KIKL motif) with BRD3 (via NET domain). In terms of tissue distribution, highly expressed in brain, heart and skeletal muscle. Expressed at lower level in liver and lung.

Its subcellular location is the nucleus. The protein localises to the chromosome. It carries out the reaction L-lysyl(4)-[histone H3] + 2 S-adenosyl-L-methionine = N(6),N(6)-dimethyl-L-lysyl(4)-[histone H3] + 2 S-adenosyl-L-homocysteine + 2 H(+). The enzyme catalyses L-lysyl(27)-[histone H3] + 2 S-adenosyl-L-methionine = N(6),N(6)-dimethyl-L-lysyl(27)-[histone H3] + 2 S-adenosyl-L-homocysteine + 2 H(+). In terms of biological role, histone methyltransferase. Preferentially dimethylates 'Lys-4' and 'Lys-27' of histone H3 forming H3K4me2 and H3K27me2. H3 'Lys-4' methylation represents a specific tag for epigenetic transcriptional activation, while 'Lys-27' is a mark for transcriptional repression. This chain is Histone-lysine N-methyltransferase NSD3, found in Homo sapiens (Human).